Reading from the N-terminus, the 101-residue chain is Small ribosomal subunit protein bS18c (101 aa).

This sequence belongs to the bacterial ribosomal protein bS18 family. As to quaternary structure, part of the 30S ribosomal subunit.

The protein resides in the plastid. It localises to the chloroplast. The polypeptide is Small ribosomal subunit protein bS18c (Carica papaya (Papaya)).